We begin with the raw amino-acid sequence, 825 residues long: Beta-glucosidase (825 aa).

Positions 1–20 (MLLPLYGLASFLVLSQAALV) are cleaved as a signal peptide. N-linked (GlcNAc...) asparagine glycosylation is found at Asn-21, Asn-74, Asn-97, Asn-230, and Asn-271. The active site involves Asp-299. Residues Asn-328, Asn-335, Asn-537, Asn-550, Asn-556, Asn-578, Asn-667, Asn-690, Asn-718, Asn-733, and Asn-761 are each glycosylated (N-linked (GlcNAc...) asparagine).

It belongs to the glycosyl hydrolase 3 family. In terms of assembly, homotetramer.

The catalysed reaction is Hydrolysis of terminal, non-reducing beta-D-glucosyl residues with release of beta-D-glucose.. It functions in the pathway glycan metabolism; cellulose degradation. This is Beta-glucosidase from Wickerhamomyces anomalus (Yeast).